Consider the following 502-residue polypeptide: Maturase K (502 aa).

Belongs to the intron maturase 2 family. MatK subfamily.

The protein localises to the plastid. The protein resides in the chloroplast. In terms of biological role, usually encoded in the trnK tRNA gene intron. Probably assists in splicing its own and other chloroplast group II introns. The sequence is that of Maturase K from Sisymbrium irio (London rocket).